Reading from the N-terminus, the 349-residue chain is MPVLHNRISNEELRARMLAETEPRTTISFYKYFTIDDPKATRDALWQAFTALNVFGRIYLAHEGINAQISVPESNVEAFRAALYGFHPALDGVRLNIALDDDGKSFWVLRMKVRDRIVADGIDDPTFDASDVGEYLKAAEVNAMLDDPDAVFIDMRNHYEYEVGHFENALEIPADTFRAQLPKAVEMMQEYKDKKIVMYCTGGIRCEKASAFMRHNGFQKVWHIEGGIIEYARKAREQGLPVRFVGKNFVFDERMGERISDDVIAHCHQCGAPCDSHTNCKNDGCHLLFIQCPACAEKFSGCCSELCKEEMSLPEEEQRRRRAGRENGNKIFNKSRGRLNTTLGIPDPE.

The 95-residue stretch at aspartate 146–leucine 240 folds into the Rhodanese domain. Residue cysteine 200 is the Cysteine persulfide intermediate of the active site. Residues proline 314 to glycine 328 show a composition bias toward basic and acidic residues. The interval proline 314–glutamate 349 is disordered.

The protein belongs to the TrhO family.

The catalysed reaction is uridine(34) in tRNA + AH2 + O2 = 5-hydroxyuridine(34) in tRNA + A + H2O. Its function is as follows. Catalyzes oxygen-dependent 5-hydroxyuridine (ho5U) modification at position 34 in tRNAs. The polypeptide is tRNA uridine(34) hydroxylase (Cronobacter sakazakii (strain ATCC BAA-894) (Enterobacter sakazakii)).